The following is a 412-amino-acid chain: Serine hydroxymethyltransferase (412 aa).

(6S)-5,6,7,8-tetrahydrofolate-binding positions include leucine 117 and 121–123 (GHL). An N6-(pyridoxal phosphate)lysine modification is found at lysine 226. 349-351 (SPF) contributes to the (6S)-5,6,7,8-tetrahydrofolate binding site.

This sequence belongs to the SHMT family. Homodimer. It depends on pyridoxal 5'-phosphate as a cofactor.

It localises to the cytoplasm. It carries out the reaction (6R)-5,10-methylene-5,6,7,8-tetrahydrofolate + glycine + H2O = (6S)-5,6,7,8-tetrahydrofolate + L-serine. The protein operates within one-carbon metabolism; tetrahydrofolate interconversion. Its pathway is amino-acid biosynthesis; glycine biosynthesis; glycine from L-serine: step 1/1. Catalyzes the reversible interconversion of serine and glycine with tetrahydrofolate (THF) serving as the one-carbon carrier. This reaction serves as the major source of one-carbon groups required for the biosynthesis of purines, thymidylate, methionine, and other important biomolecules. Also exhibits THF-independent aldolase activity toward beta-hydroxyamino acids, producing glycine and aldehydes, via a retro-aldol mechanism. The protein is Serine hydroxymethyltransferase of Nitratidesulfovibrio vulgaris (strain DSM 19637 / Miyazaki F) (Desulfovibrio vulgaris).